The chain runs to 396 residues: MAETQVRNFNINFGPQHPAAHGVLRLVLELDGEVVERVDPHIGLLHRGTEKLMEAKTYLQAVPYLDRLDYVAPMNQEHAYALAVERLLDIEVPKRGQLIRVLYSEIGRILNHLLNVTTQAMDVGALTPPLWGFEEREKLMVFYERACGARMHAAYFRPGGVHQDLPDQLIEDIGKWIDPFFTTLKNLDDLITPNRIFKQRNVDIGVVKLEDAWAWGFSGVMVRGSGAAWDLRKSQPYECYSEMEFDIPVGKNGDCYDRYLIRMEEMRQSARIMRQCVDLLLGKERVGPVSNTDHKIVPPKRGEMKRSMEALIHHFKLYTEGYHVPAGEVYAAVEAPKGEFGVYLVSDGSNKPYRCKLRAPGFAHLQAMDFLCRGHMLADVSAILGSLDIVFGEVDR.

The protein belongs to the complex I 49 kDa subunit family. In terms of assembly, NDH-1 is composed of 14 different subunits. Subunits NuoB, C, D, E, F, and G constitute the peripheral sector of the complex.

The protein resides in the cell inner membrane. It carries out the reaction a quinone + NADH + 5 H(+)(in) = a quinol + NAD(+) + 4 H(+)(out). In terms of biological role, NDH-1 shuttles electrons from NADH, via FMN and iron-sulfur (Fe-S) centers, to quinones in the respiratory chain. The immediate electron acceptor for the enzyme in this species is believed to be ubiquinone. Couples the redox reaction to proton translocation (for every two electrons transferred, four hydrogen ions are translocated across the cytoplasmic membrane), and thus conserves the redox energy in a proton gradient. This chain is NADH-quinone oxidoreductase subunit D, found in Brucella canis (strain ATCC 23365 / NCTC 10854 / RM-666).